A 345-amino-acid polypeptide reads, in one-letter code: Putative F-box protein At3g17265 (345 aa).

Positions 1–46 constitute an F-box domain; it reads MMFAYLPPDLESEILSRVPATFLKELQTTCKRWYALFRDPIFVKKN.

This Arabidopsis thaliana (Mouse-ear cress) protein is Putative F-box protein At3g17265.